The primary structure comprises 294 residues: Glycine--tRNA ligase alpha subunit (294 aa).

This sequence belongs to the class-II aminoacyl-tRNA synthetase family. In terms of assembly, tetramer of two alpha and two beta subunits.

It is found in the cytoplasm. The enzyme catalyses tRNA(Gly) + glycine + ATP = glycyl-tRNA(Gly) + AMP + diphosphate. The sequence is that of Glycine--tRNA ligase alpha subunit from Lawsonia intracellularis (strain PHE/MN1-00).